A 347-amino-acid chain; its full sequence is uncharacterized protein (347 aa).

Coiled-coil stretches lie at residues 148–201 (DQQS…EKDG) and 261–298 (LENLTFRLNLINDLNKKEEEKEKEKEKEKEENSFDTFS). The segment at 151–203 (SISNLRKEEKEKQKENENENENENENENENEKENQELDKKVNQTNDNEKDGDE) is disordered. Basic and acidic residues predominate over residues 155 to 167 (LRKEEKEKQKENE). The span at 168–178 (NENENENENEN) shows a compositional bias: acidic residues. Positions 179–191 (ENEKENQELDKKV) are enriched in basic and acidic residues.

This is an uncharacterized protein from Dictyostelium discoideum (Social amoeba).